The sequence spans 379 residues: RNA-splicing ligase RtcB2 (379 aa).

Mn(2+) is bound by residues D74, C77, H137, H168, and H239. 136-140 contacts GMP; that stretch reads NHFVE. GMP is bound by residues 239 to 240, S277, 294 to 297, and K372; these read HN and HGAG. Catalysis depends on H294, which acts as the GMP-histidine intermediate.

The protein belongs to the RtcB family. RtcB2 subfamily. Mn(2+) serves as cofactor.

It carries out the reaction a 3'-end 3'-phospho-ribonucleotide-RNA + a 5'-end dephospho-ribonucleoside-RNA + GTP = a ribonucleotidyl-ribonucleotide-RNA + GMP + diphosphate. Functionally, GTP-dependent RNA ligase involved in rRNA repair. Repairs damaged 16S rRNA in 30S subunits that has been cleaved between adenine-1493 and guanosine-1494 (E.coli nubering). This specific cleavage is inflicted by CdiA (ECL_04451) or by colicin E3-type (ColE3) proteins. Poorly repairs damaged rRNA in the 70S ribosome; addition of release factor PrfH improves repair about 3-fold in vitro, probably because PrfH hydrolyzes the nascent chain allowing ribosomal subunit dissociation. In vivo the PrfH-RtcB2 pair restores growth in the presence of ribotoxins that specifically create this damage. Does not repair damaged tRNA (tested with tRNA(Asp) and tRNA(Arg)). The sequence is that of RNA-splicing ligase RtcB2 from Escherichia coli (strain ATCC 25922 / DSM 1103 / LMG 8223 / NCIMB 12210 / NCTC 12241 / WDCM 00013 / Seattle 1946).